A 222-amino-acid polypeptide reads, in one-letter code: 26S proteasome non-ATPase regulatory subunit 9 (222 aa).

One can recognise a PDZ domain in the interval 108–194 (QARDMAEARE…KPLNVMVIRR (87 aa)). Ser-128 is modified (phosphoserine).

It belongs to the proteasome subunit p27 family. As to quaternary structure, interacts with PSMC3. Part of a transient complex (modulator) containing PSMD9, PSMC6 and PSMC3 formed during the assembly of the 26S proteasome.

In terms of biological role, acts as a chaperone during the assembly of the 26S proteasome, specifically of the base subcomplex of the PA700/19S regulatory complex (RC). During the base subcomplex assembly is part of an intermediate PSMD9:PSMC6:PSMC3 module, also known as modulator trimer complex; PSMD9 is released during the further base assembly process. The polypeptide is 26S proteasome non-ATPase regulatory subunit 9 (Psmd9) (Rattus norvegicus (Rat)).